The following is a 180-amino-acid chain: MSIRLSAVYHPVRDDPDCMFRYMPHEPLPRKLKGDDYTILKLLSDAHRYYYSLSDSFKRVFKESINNAYWSVLTFNDYILINVLDERVKTSIGGDGYEIVSDTTRVIHINIGDEVVLQVVDERVKHYGSSHTIRSIRLVRGEIPDLASFHAYTQSKPYNKGRLPPPREIITPDGHVMKIL.

This is an uncharacterized protein from Magallana gigas (Pacific oyster).